Here is a 315-residue protein sequence, read N- to C-terminus: Ribonuclease HII (315 aa).

An RNase H type-2 domain is found at 78–267 (TLVAGVDEAG…VREALGLAPL (190 aa)). Residues Asp-84, Glu-85, and Asp-176 each coordinate a divalent metal cation. A disordered region spans residues 273–292 (APPPESAAEPGGEGAIAGIA). Residues 278-292 (SAAEPGGEGAIAGIA) are compositionally biased toward low complexity.

Belongs to the RNase HII family. The cofactor is Mn(2+). It depends on Mg(2+) as a cofactor.

It localises to the cytoplasm. The enzyme catalyses Endonucleolytic cleavage to 5'-phosphomonoester.. Endonuclease that specifically degrades the RNA of RNA-DNA hybrids. In Anaeromyxobacter sp. (strain Fw109-5), this protein is Ribonuclease HII.